Here is a 461-residue protein sequence, read N- to C-terminus: tRNA modification GTPase MnmE (461 aa).

The (6S)-5-formyl-5,6,7,8-tetrahydrofolate site is built by arginine 21, glutamate 87, and lysine 126. Positions 222 to 384 constitute a TrmE-type G domain; it reads QSTVVLYGEP…LLELLKSKLT (163 aa). Asparagine 232 is a K(+) binding site. GTP is bound by residues 232 to 237, 251 to 257, and 276 to 279; these read NTGKSS, SDVPGTT, and DTAG. Serine 236 serves as a coordination point for Mg(2+). K(+) is bound by residues serine 251, valine 253, and threonine 256. Threonine 257 is a binding site for Mg(2+). Lysine 461 is a binding site for (6S)-5-formyl-5,6,7,8-tetrahydrofolate.

This sequence belongs to the TRAFAC class TrmE-Era-EngA-EngB-Septin-like GTPase superfamily. TrmE GTPase family. In terms of assembly, homodimer. Heterotetramer of two MnmE and two MnmG subunits. K(+) serves as cofactor.

The protein resides in the cytoplasm. In terms of biological role, exhibits a very high intrinsic GTPase hydrolysis rate. Involved in the addition of a carboxymethylaminomethyl (cmnm) group at the wobble position (U34) of certain tRNAs, forming tRNA-cmnm(5)s(2)U34. The sequence is that of tRNA modification GTPase MnmE from Leptospira biflexa serovar Patoc (strain Patoc 1 / Ames).